Consider the following 184-residue polypeptide: Type-1 fimbrial protein, A chain (184 aa).

Residues 1–22 (MKHKLMTSTIASLMFVAGAAVA) form the signal peptide. The cysteines at positions 46 and 86 are disulfide-linked.

This sequence belongs to the fimbrial protein family.

It localises to the fimbrium. Fimbriae (also called pili), polar filaments radiating from the surface of the bacterium to a length of 0.5-1.5 micrometers and numbering 100-300 per cell, enable bacteria to colonize the epithelium of specific host organs. This Salmonella typhi protein is Type-1 fimbrial protein, A chain (fimA).